The chain runs to 185 residues: Photosystem I assembly protein Ycf4 (185 aa).

2 helical membrane passes run 24–44 (YIIG…SISS) and 66–86 (IIMG…WYMV).

Belongs to the Ycf4 family.

The protein resides in the cellular thylakoid membrane. In terms of biological role, seems to be required for the assembly of the photosystem I complex. This Prochlorococcus marinus (strain MIT 9312) protein is Photosystem I assembly protein Ycf4.